An 850-amino-acid polypeptide reads, in one-letter code: MAVTSHHMVPVFVLMSACLATAGPEPSTRCELSPISASHPVQALMESFTVLSGCASRGTTGLPREVHILNLRSTDQGLGQPQREVTLHLNPIASVHTHHKPVVFLLNSPQPLVWHVKTERLAAGVPRLFLVSEGSVVQFSSGNFSLTAETEERSFPQENEHLLHWAQKEYGAVTSFTELKIARNIYIKVGEDQVFPPTCNIGKNFLSLNYLAEYLQPKAAEGCVLASQPHEKEVHIIELISPNSNPYSTFQVDIIIDIRPAREDPEVVKNLVLILKCKKSVNWVIKSFDVKGNLKVIAPDSIGFGKESERSMTVTKLVRNDYPSTQENLMKWALDNGYSPVTSYTIAPVANRFHLRLENNEEMRDEEVHTIPPELRILLGPDHLPALDSPPFQGEIPNGGFPFPFPDIPRRGWKEGEDRIPRPKEPIIPRVQLLPDHREPEEVQGGVNIALSVKCDNEKMVVAVDKDSFQTNGYSGMELTLLDPSCKAKMNGTHFVLESPLNGCGTRHRRSAPDGVVYYNSIVVQAPSPGDSSGWPDGYEDLESGDNGFPGDTDEGETAPLSRAGVVVFNCSLRQLRSPSGFQDQLDGNATFNMELYNTDLFLVPSPGVFSVAENEHVYVEVSVTKADQDLGFAIQTCFISPYSNPDRMSDYTIIENICPKDDSVKFYSSKRVHFPIPHAEVDKKRFSFVFKSVFNTSLLFLHCELTLCSRNKGSQKLPKCVTPDDACTSLDATMIWTMMQNKKTFTKPLAVVLQVDYKENVPNMKESSPVPPPPQIFHGLDTLTVMGIAFAAFVIGALLTGALWYIYSHTGETARRQQVPTSPPASENSSAAHSIGSTQSTPCSSSSTA.

A signal peptide spans 1–22; it reads MAVTSHHMVPVFVLMSACLATA. Topologically, residues 23–785 are extracellular; sequence GPEPSTRCEL…QIFHGLDTLT (763 aa). The cysteines at positions 54 and 199 are disulfide-linked. 2 N-linked (GlcNAc...) asparagine glycosylation sites follow: Asn143 and Asn491. The region spanning 454-728 is the ZP domain; that stretch reads KCDNEKMVVA…PKCVTPDDAC (275 aa). Positions 528 to 557 are disordered; sequence SPGDSSGWPDGYEDLESGDNGFPGDTDEGE. 2 O-linked (Xyl...) (glycosaminoglycan) serine glycosylation sites follow: Ser533 and Ser544. N-linked (GlcNAc...) asparagine glycans are attached at residues Asn570, Asn589, and Asn696. 3 cysteine pairs are disulfide-bonded: Cys638-Cys704, Cys659-Cys728, and Cys709-Cys721. An interaction with TGF-beta ligand region spans residues 735-749; the sequence is MIWTMMQNKKTFTKP. The helical transmembrane segment at 786–808 threads the bilayer; that stretch reads VMGIAFAAFVIGALLTGALWYIY. The Cytoplasmic portion of the chain corresponds to 809 to 850; sequence SHTGETARRQQVPTSPPASENSSAAHSIGSTQSTPCSSSSTA. Polar residues predominate over residues 817–833; it reads RQQVPTSPPASENSSAA. The tract at residues 817–850 is disordered; it reads RQQVPTSPPASENSSAAHSIGSTQSTPCSSSSTA. Over residues 835-850 the composition is skewed to low complexity; that stretch reads SIGSTQSTPCSSSSTA. Thr839 carries the post-translational modification Phosphothreonine.

As to quaternary structure, forms homodimers and homooligomers. Interacts with DYNLT4. Interacts with integrin ITGA5:ITGB1; this interaction promotes the internalization and trafficking of ITGA5:ITGB1 into endocytic vesicles. Interacts with TGFB1, BMP2, BMP5, BMP7 or GDF5 and inhibin A via the ligand binding domains. Interacts with ALK3/BMPR1A; this interaction results in the cell surface retention of BMPR1A. Interacts with ALK6/BMPR1B; this interaction enhances BMPR1B-mediated stimulation of the BMP signaling pathway. Interacts with the scaffolding protein beta-arrestin2/ARRB2; this interaction mediates internalization of TGFBR3 and thus regulates migration, actin cytoskeleton and activation of CDC42. Extensively modified by glycosaminoglycan groups (GAG). Post-translationally, phosphorylated in the cytoplasmic domain by the type II receptor TGFBR2 at THR-839 to mediate recruitment of ARRB2 and subsequent internalization of TGFBR2 and TGFBR3.

The protein resides in the cell membrane. Its subcellular location is the secreted. It localises to the extracellular space. The protein localises to the extracellular matrix. Cell surface receptor that regulates diverse cellular processes including cell proliferation, differentiation, migration, and apoptosis. Initiates BMP, inhibin, and TGF-beta signaling pathways by interacting with different ligands including TGFB1, BMP2, BMP5, BMP7 or GDF5. Alternatively, acts as a cell surface coreceptor for BMP ligands, serving to enhance ligand binding by differentially regulating BMPR1A/ALK3 and BMPR1B/ALK6 receptor trafficking. Promotes epithelial cell adhesion, focal adhesion formation and integrin signaling during epithelial cell spreading on fibronectin. By interacting with the scaffolding protein beta-arrestin2/ARRB2, regulates migration or actin cytoskeleton and promotes the activation of CDC42 as well as the inhibition of NF-kappa-B. In gonadotrope cells, acts as an inhibin A coreceptor and regulates follicle-stimulating hormone (FSH) levels and female fertility. Plays a role in the inhibition of directed and random cell migration in epithelial cells by altering the actin cytoskeletal organization. Participates in epithelial-mesenchymal transformation (EMT) upon binding to BMP2 or TGFB2, by activating the PAR6/SMURF1/RHOA pathway. This Mus musculus (Mouse) protein is Transforming growth factor beta receptor type 3 (Tgfbr3).